A 433-amino-acid polypeptide reads, in one-letter code: Ribosomal protein uS12 methylthiotransferase RimO (433 aa).

The MTTase N-terminal domain occupies 9 to 124 (NKINVITLGC…LLKALGADYR (116 aa)). [4Fe-4S] cluster contacts are provided by Cys18, Cys53, Cys87, Cys148, Cys152, and Cys155. In terms of domain architecture, Radical SAM core spans 134–364 (TTPKNYAYLK…MDLQSQISWD (231 aa)). The 67-residue stretch at 367-433 (QEKLGQTFRC…TEFDLYGEPA (67 aa)) folds into the TRAM domain.

Belongs to the methylthiotransferase family. RimO subfamily. It depends on [4Fe-4S] cluster as a cofactor.

The protein localises to the cytoplasm. The enzyme catalyses L-aspartate(89)-[ribosomal protein uS12]-hydrogen + (sulfur carrier)-SH + AH2 + 2 S-adenosyl-L-methionine = 3-methylsulfanyl-L-aspartate(89)-[ribosomal protein uS12]-hydrogen + (sulfur carrier)-H + 5'-deoxyadenosine + L-methionine + A + S-adenosyl-L-homocysteine + 2 H(+). Its function is as follows. Catalyzes the methylthiolation of an aspartic acid residue of ribosomal protein uS12. This chain is Ribosomal protein uS12 methylthiotransferase RimO, found in Flavobacterium psychrophilum (strain ATCC 49511 / DSM 21280 / CIP 103535 / JIP02/86).